We begin with the raw amino-acid sequence, 123 residues long: WAP four-disulfide core domain protein 5 (123 aa).

A signal peptide spans 1-24 (MRIQSLLLLGALLAVGSQLPAVFG). 2 consecutive WAP domains span residues 27–73 (KGEK…CVPR) and 74–121 (VSVK…RDPA). 8 disulfides stabilise this stretch: Cys34–Cys62, Cys41–Cys66, Cys49–Cys61, Cys55–Cys70, Cys81–Cys109, Cys88–Cys113, Cys96–Cys108, and Cys102–Cys117.

The protein resides in the secreted. Its function is as follows. Putative acid-stable proteinase inhibitor. This Pongo abelii (Sumatran orangutan) protein is WAP four-disulfide core domain protein 5 (WFDC5).